Consider the following 666-residue polypeptide: Enzymatic polyprotein (666 aa).

Aspartate 54 is a catalytic residue. The region spanning 215–445 (ENPIDPIKSK…EKINFLGLEI (231 aa)) is the Reverse transcriptase domain.

Belongs to the caulimoviridae enzymatic polyprotein family.

It carries out the reaction DNA(n) + a 2'-deoxyribonucleoside 5'-triphosphate = DNA(n+1) + diphosphate. In terms of biological role, encodes for at least two polypeptides: protease (PR) and reverse transcriptase (RT). The protease processes the polyprotein in cis. Reverse transcriptase is multifunctional enzyme that converts the viral RNA genome into dsDNA in viral cytoplasmic capsids. This enzyme displays a DNA polymerase activity that can copy either DNA or RNA templates, and a ribonuclease H (RNase H) activity that cleaves the RNA strand of RNA-DNA heteroduplexes in a partially processive 3'- to 5'-endonucleasic mode. Neo-synthesized pregenomic RNA (pgRNA) are encapsidated, and reverse-transcribed inside the nucleocapsid. Partial (+)DNA is synthesized from the (-)DNA template and generates the relaxed circular DNA (RC-DNA) genome. After budding and infection, the RC-DNA migrates in the nucleus, and is converted into a plasmid-like covalently closed circular DNA (cccDNA). In Figwort mosaic virus (strain DxS) (FMV), this protein is Enzymatic polyprotein.